The primary structure comprises 2066 residues: Kinesin-like protein KIN-12C (2066 aa).

2 disordered regions span residues 1-41 (MSRN…SQIQ) and 59-116 (RAQH…RVSL). Positions 20–33 (SLSLFSPSRPPLNS) are enriched in low complexity. The span at 67–76 (GPEKKFEVLE) shows a compositional bias: basic and acidic residues. Residues 99-109 (EPNSAQSTPTR) are compositionally biased toward polar residues. In terms of domain architecture, Kinesin motor spans 168 to 505 (NVQVLIRLRP…LKFAQRAKLI (338 aa)). 249 to 256 (GQTGSGKT) provides a ligand contact to ATP. Microtubules-binding regions lie at residues 375–379 (SSRSH), 406–412 (VDLAGSE), and 454–458 (HVPYR). 2 coiled-coil regions span residues 1521–1618 (DLKT…VDEI) and 1650–1772 (KIYA…EILL). Disordered stretches follow at residues 1803–1823 (SAAE…RGSS) and 2043–2066 (KYRK…TRYR). A coiled-coil region spans residues 1905-2051 (VQRVVEKAQQ…AKYRKTSNNH (147 aa)). Residues 2047 to 2066 (TSNNHPSTRTQGQSSGTRYR) show a composition bias toward polar residues.

Belongs to the TRAFAC class myosin-kinesin ATPase superfamily. Kinesin family. KIN-12 subfamily. In terms of assembly, interacts with TAN. Interacts with RANGAP1. Expressed in tissues enriched in dividing cells, such as root meristems, root primordia, and leaf primordia/young leaves.

The protein resides in the cytoplasm. The protein localises to the cytoskeleton. It is found in the phragmoplast. Involved in the spatial control of cytokinesis by a proper phragmoplast guidance. Localizes TAN to the cortical division sites (CDS) during cytokinesis via direct binding. The protein is Kinesin-like protein KIN-12C of Arabidopsis thaliana (Mouse-ear cress).